Reading from the N-terminus, the 257-residue chain is 5-oxoprolinase subunit A (257 aa).

The protein belongs to the LamB/PxpA family. Forms a complex composed of PxpA, PxpB and PxpC.

The catalysed reaction is 5-oxo-L-proline + ATP + 2 H2O = L-glutamate + ADP + phosphate + H(+). Catalyzes the cleavage of 5-oxoproline to form L-glutamate coupled to the hydrolysis of ATP to ADP and inorganic phosphate. The protein is 5-oxoprolinase subunit A of Natranaerobius thermophilus (strain ATCC BAA-1301 / DSM 18059 / JW/NM-WN-LF).